Reading from the N-terminus, the 418-residue chain is Tyrosine--tRNA ligase (418 aa).

The short motif at 42-51 (PTSPDLHLGH) is the 'HIGH' region element. Residues 226–230 (KMSKS) carry the 'KMSKS' region motif. Residue Lys229 coordinates ATP. Residues 339-400 (VRLVALLTKS…GKRNFIKVRL (62 aa)) form the S4 RNA-binding domain.

Belongs to the class-I aminoacyl-tRNA synthetase family. TyrS type 2 subfamily. In terms of assembly, homodimer.

Its subcellular location is the cytoplasm. It catalyses the reaction tRNA(Tyr) + L-tyrosine + ATP = L-tyrosyl-tRNA(Tyr) + AMP + diphosphate + H(+). Functionally, catalyzes the attachment of tyrosine to tRNA(Tyr) in a two-step reaction: tyrosine is first activated by ATP to form Tyr-AMP and then transferred to the acceptor end of tRNA(Tyr). The sequence is that of Tyrosine--tRNA ligase from Xylella fastidiosa (strain Temecula1 / ATCC 700964).